The chain runs to 440 residues: MGSSHLLNKGLPLGIRPPIMNGPMHPRPLVALLDGRDCTVEMPILKDVATVAFCDAQSTQEIHEKVLNEAVGALMYHTITLTREDLEKFKALRIIVRIGSGFDNIDIKSAGDLGIAVCNVPAASVEETADSTMCHILNLYRRTTWLHQALREGTRVQSVEQIREVASGAARIRGETLGIIGLGRVGQAVALRAKTFGFNVFFYDPYLSDGIERALGLQRVSTLQDLLFHSDCVTLHCGLNEHNHHLINDFTIKQMRQGAFLVNTARGGLVDEKALAQALKEGRIRGAALDVHESEPFSFTQGPLKDAPNLICTPHAAWYSEQASIEMREEAAREIRRAITGRIPDSLKNCVNKDHLTAATHWASMDPGVVHPELNGGAYRYPQGVVSVAPAGLPAAVEGIVPSAMSLSHAHPAVAHPPHAPSPGQTIKPEADRDHPSDQL.

NAD(+) contacts are provided by residues Ser-100, 180 to 185 (IGLGRV), Asp-204, 237 to 243 (CGLNEHN), 264 to 266 (TAR), and Asp-290. Arg-266 is a catalytic residue. Glu-295 is an active-site residue. Residue His-315 is the Proton donor of the active site. NAD(+) is bound at residue 315–318 (HAAW). The segment at 409 to 440 (HAHPAVAHPPHAPSPGQTIKPEADRDHPSDQL) is disordered. Residues 429-440 (PEADRDHPSDQL) show a composition bias toward basic and acidic residues.

It belongs to the D-isomer specific 2-hydroxyacid dehydrogenase family. NAD(+) serves as cofactor.

The protein localises to the nucleus. In terms of biological role, corepressor targeting diverse transcription regulators. Has dehydrogenase activity. The chain is C-terminal-binding protein 1 (ctbp1) from Xenopus laevis (African clawed frog).